We begin with the raw amino-acid sequence, 665 residues long: Probable potassium transport system protein Kup 2 (665 aa).

A run of 13 helical transmembrane segments spans residues 13 to 33 (GLLV…LYVM), 55 to 75 (ISLI…LIAL), 98 to 118 (WLVL…TLTP), 138 to 158 (IPVP…LFLF), 167 to 187 (IIGK…GLTG), 195 to 215 (LSLL…SPAN), 217 to 237 (VGVL…ALYS), 250 to 270 (SWPY…VWIL), 295 to 315 (FFAI…LITG), 344 to 364 (IFIP…VFLF), 375 to 395 (GLAI…YLSL), 400 to 420 (ILLR…FLIS), and 428 to 448 (GGYV…IWYF).

Belongs to the HAK/KUP transporter (TC 2.A.72) family.

It is found in the cell membrane. The enzyme catalyses K(+)(in) + H(+)(in) = K(+)(out) + H(+)(out). Its function is as follows. Transport of potassium into the cell. Likely operates as a K(+):H(+) symporter. This Lactobacillus johnsonii (strain CNCM I-12250 / La1 / NCC 533) protein is Probable potassium transport system protein Kup 2.